The following is a 295-amino-acid chain: Protoheme IX farnesyltransferase (295 aa).

A run of 9 helical transmembrane segments spans residues 8-28 (VTKP…FLLA), 35-55 (YPLF…GCVF), 84-104 (ASLV…WFGA), 107-127 (LACW…SLYM), 132-152 (VYGT…GYCA), 162-182 (AILL…IAIF), 208-228 (ITLY…GGYA), 233-253 (LVVA…GYKV), and 264-284 (FVFS…DFMV).

The protein belongs to the UbiA prenyltransferase family. Protoheme IX farnesyltransferase subfamily.

It is found in the cell inner membrane. The catalysed reaction is heme b + (2E,6E)-farnesyl diphosphate + H2O = Fe(II)-heme o + diphosphate. The protein operates within porphyrin-containing compound metabolism; heme O biosynthesis; heme O from protoheme: step 1/1. In terms of biological role, converts heme B (protoheme IX) to heme O by substitution of the vinyl group on carbon 2 of heme B porphyrin ring with a hydroxyethyl farnesyl side group. In Klebsiella pneumoniae subsp. pneumoniae (strain ATCC 700721 / MGH 78578), this protein is Protoheme IX farnesyltransferase.